The following is a 330-amino-acid chain: L-tryptophan isonitrile synthase AmbI2 (330 aa).

This sequence belongs to the isocyanide synthase family.

It catalyses the reaction D-ribulose 5-phosphate + L-tryptophan = (2S)-3-(1H-indol-3-yl)-2-isocyanopropanoate + hydroxyacetone + formaldehyde + phosphate + H2O + H(+). Its function is as follows. Involved in the biosynthesis of ambiguines, a family of hapalindole-type alkaloids. Responsible for the synthesis of the isonitrile group on tryptophan using ribulose 5-phosphate as the source of the carbon atom. The sequence is that of L-tryptophan isonitrile synthase AmbI2 from Fischerella ambigua (strain UTEX 1903).